Reading from the N-terminus, the 618-residue chain is Paraneoplastic antigen-like protein 5 (618 aa).

The segment covering 390–399 (AGEEGQRKES) has biased composition (basic and acidic residues). Disordered regions lie at residues 390 to 409 (AGEE…EPDE), 451 to 475 (RDTL…EGQQ), and 519 to 549 (SMIT…ELRM).

The protein belongs to the PNMA family. As to expression, restricted to testis, where expression is low. Not detected in the brain.

Its subcellular location is the nucleus. This Mus musculus (Mouse) protein is Paraneoplastic antigen-like protein 5 (Pnma5).